The primary structure comprises 51 residues: Large ribosomal subunit protein eL39 (51 aa).

This sequence belongs to the eukaryotic ribosomal protein eL39 family. In terms of assembly, interacts with YIH1.

This is Large ribosomal subunit protein eL39 (RPL39) from Kluyveromyces marxianus (Yeast).